The sequence spans 1167 residues: ATP-dependent helicase/deoxyribonuclease subunit B (1167 aa).

One can recognise a UvrD-like helicase ATP-binding domain in the interval 1-359; that stretch reads MSLRFLLGRS…IRQTEAYRDL (359 aa). 8–15 lines the ATP pocket; that stretch reads GRSGSGKT. Residues 282 to 588 form the UvrD-like helicase C-terminal domain; that stretch reads VNRRHQDKAL…EFALVPPAID (307 aa). Residues Cys-803, Cys-1125, Cys-1128, and Cys-1134 each coordinate [4Fe-4S] cluster.

Belongs to the helicase family. AddB/RexB type 1 subfamily. In terms of assembly, heterodimer of AddA and AddB. It depends on Mg(2+) as a cofactor. The cofactor is [4Fe-4S] cluster.

Its function is as follows. The heterodimer acts as both an ATP-dependent DNA helicase and an ATP-dependent, dual-direction single-stranded exonuclease. Recognizes the chi site generating a DNA molecule suitable for the initiation of homologous recombination. The AddB subunit has 5' -&gt; 3' nuclease activity but not helicase activity. This chain is ATP-dependent helicase/deoxyribonuclease subunit B, found in Geobacillus thermodenitrificans (strain NG80-2).